A 206-amino-acid chain; its full sequence is Large ribosomal subunit protein bL9 (206 aa).

The segment at F182–A206 is disordered. Residues N197–A206 show a composition bias toward polar residues.

Belongs to the bacterial ribosomal protein bL9 family.

In terms of biological role, binds to the 23S rRNA. The chain is Large ribosomal subunit protein bL9 from Bartonella henselae (strain ATCC 49882 / DSM 28221 / CCUG 30454 / Houston 1) (Rochalimaea henselae).